The following is a 1895-amino-acid chain: Diacylglycerol kinase eta (1895 aa).

The span at 1-10 shows a compositional bias: basic and acidic residues; that stretch reads MAHLKLDTLH. Positions 1–37 are disordered; sequence MAHLKLDTLHVQRSPRGSRRSSPSSGRSSACSSGSIS. Residues 20–37 are compositionally biased toward low complexity; it reads RSSPSSGRSSACSSGSIS. Positions 82–175 constitute a PH domain; sequence AIIKEGFLLK…WLGSLKTATA (94 aa). 2 Phorbol-ester/DAG-type zinc fingers span residues 195-245 and 267-318; these read HHHW…IANC and PHQW…AVAC. The DAGKc domain maps to 349 to 485; that stretch reads GNFSPLLVFV…DRWSIMVFEK (137 aa). 4 disordered regions span residues 781-801, 1012-1053, 1113-1137, and 1172-1191; these read ANID…ENTP, TTLC…MARL, QHRG…GANL, and PNTI…HGQD. Residues 1113-1128 are compositionally biased toward basic and acidic residues; that stretch reads QHRGGDNDSDYPEHEQ. Polar residues predominate over residues 1172–1184; it reads PNTILTTSTSPTK. An SAM domain is found at 1832-1895; it reads WSVNEVVTWL…LQAIKDLSEN (64 aa).

Belongs to the eukaryotic diacylglycerol kinase family.

The protein localises to the cytoplasm. It carries out the reaction a 1,2-diacyl-sn-glycerol + ATP = a 1,2-diacyl-sn-glycero-3-phosphate + ADP + H(+). Phosphorylates diacylglycerol (DAG) to generate phosphatidic acid (PA). The sequence is that of Diacylglycerol kinase eta from Drosophila melanogaster (Fruit fly).